Reading from the N-terminus, the 133-residue chain is Small ribosomal subunit protein uS11 (133 aa).

The protein belongs to the universal ribosomal protein uS11 family. In terms of assembly, part of the 30S ribosomal subunit. Interacts with proteins S7 and S18. Binds to IF-3.

Functionally, located on the platform of the 30S subunit, it bridges several disparate RNA helices of the 16S rRNA. Forms part of the Shine-Dalgarno cleft in the 70S ribosome. In Ralstonia pickettii (strain 12J), this protein is Small ribosomal subunit protein uS11.